The sequence spans 359 residues: MVDKLEAIKSRFDEVAEAILDPNIMSDMKRYASLNKEYKELNKIVEVYAQYKNILDNIESSKKVLSVEKDPDFREMAKEELETLAVQKDDIELVIKELLIPKDPNDSKNIILEIRGGTGGDEASIFAGDIFRMYQRYCDRMGWKMELIDATEGTSGGYKEIICGISGEDVYGKLKFESGVHRVQRVPATETQGRIHTSAASVAVLPEVEELDVQLNMNDIRKDTFCSSGPGGQSVNTTYSAIRLTHIPSGTVVQCQDEKSQIKNFEKALKVLRSRIYEIEYKKQQDELGKERNSMIGSGDRSDKIRTYNYPQSRVTDHRIGHTVHNLPAVMDGNIDDFIEELRLAENAERLKEGAQETA.

The residue at position 233 (Q233) is an N5-methylglutamine.

This sequence belongs to the prokaryotic/mitochondrial release factor family. Post-translationally, methylated by PrmC. Methylation increases the termination efficiency of RF1.

The protein resides in the cytoplasm. Its function is as follows. Peptide chain release factor 1 directs the termination of translation in response to the peptide chain termination codons UAG and UAA. The protein is Peptide chain release factor 1 of Cytophaga hutchinsonii (strain ATCC 33406 / DSM 1761 / CIP 103989 / NBRC 15051 / NCIMB 9469 / D465).